Consider the following 363-residue polypeptide: Fructose-bisphosphate aldolase 2 (363 aa).

D-glyceraldehyde 3-phosphate is bound at residue S61. D109 functions as the Proton donor in the catalytic mechanism. Residues H110, D144, E174, and H226 each coordinate Zn(2+). Residue G227 coordinates dihydroxyacetone phosphate. H264 provides a ligand contact to Zn(2+). 265–267 (GGS) contacts dihydroxyacetone phosphate.

It belongs to the class II fructose-bisphosphate aldolase family. Homodimer. Zn(2+) serves as cofactor.

It catalyses the reaction beta-D-fructose 1,6-bisphosphate = D-glyceraldehyde 3-phosphate + dihydroxyacetone phosphate. Its pathway is carbohydrate degradation; glycolysis; D-glyceraldehyde 3-phosphate and glycerone phosphate from D-glucose: step 4/4. Functionally, catalyzes the aldol condensation of dihydroxyacetone phosphate (DHAP or glycerone-phosphate) with glyceraldehyde 3-phosphate (G3P) to form fructose 1,6-bisphosphate (FBP) in gluconeogenesis and the reverse reaction in glycolysis. This Paracoccidioides lutzii (strain ATCC MYA-826 / Pb01) (Paracoccidioides brasiliensis) protein is Fructose-bisphosphate aldolase 2 (FBA2).